The primary structure comprises 381 residues: Hps1-dma1 cluster transcription factor tfc7 (381 aa).

Positions 10 to 37 (CDHCSATKIKCTQERPQCTRCRALGRDC) form a DNA-binding region, zn(2)-C6 fungal-type. Residues 41-88 (RSLRAGKPPRSSQGLNRKISNAPVLPRQNTPVSNPTSMSSKPEHWPTM) are disordered. Polar residues-rich tracts occupy residues 50–59 (RSSQGLNRKI) and 67–80 (RQNTPVSNPTSMSS).

The protein resides in the nucleus. In terms of biological role, transcription factor that regulates the expression of the hps1-dma1 gene cluster that probably mediates the biosynthesis a derivative of cyclopiazonic acid (CPA). Further studies are required to whether the CPA-like hps1-dma1 cluster is functional or a non-functional relic reflecting evolution of D.septosporum. This Dothistroma septosporum (strain NZE10 / CBS 128990) (Red band needle blight fungus) protein is Hps1-dma1 cluster transcription factor tfc7 (tfc7).